Here is a 1452-residue protein sequence, read N- to C-terminus: MNESHEAGKNSSTNVEEREEEVLRLARQFTEQSSYSTAGQTPFAAEAGSALDPNGERFNARAWCKAMLQMHIGDKEAHPLRTLGVAFSNLNVHGFGSDTDYQKSVGNVWLKTLSLARIAFGQKQRKVDILQNLEGLVEAGEMLVVLGPPGSGCSTFLKTIAGETYGFHVDKNSNINFQGIAKQMAHEFRGEAIYTAEVDVHFPKLTVGDTLYFAARARTPRHIPGGVNATQYAGHMRDVIMAMFGISHTKNTIVGNDFIRGVSGGERKRVSIAEACLSNAPLQCWDNSTRGLDSANAIEFCKTLRMQADINGTTACVSLYQAPQAAYDYFDKVLVLYEGREIYFGPTSMAKHYFLQMGFVCPDRQTDADFLTSMTSHLERVVQPGYEDRVPRTPDEFAARWKASPQRAQLMQHIKSYNAKFALDGEYLDKFKQSRRAQQAKAQRVSSPYTLSYVQQVKLCLWRGYQRLKADPSVTISSLFGNTIISLVIASIFYNLKADTSTFFQRGALLFFAVLMNALGCGLEMLTLYAQRGIIEKHSRYALYHPSAEAFSSMIMDLPYKILNAITSNIVLYFMTNLRREPGAFFFFVFTSFILTLTMSMFFRSMASLSRSLVQVLPFSAVLLLGLSMYTGFAIPTGYMLGWARWIAYINPISYGFESLMINEFHNRDFPCMDYVPSGPGYTDVGLNNRVCSTVRSVPGQAFVNGNAYIESAYSYTASHKWRNIGVIFAYMFLLGAVYLVATDFITEKKPKGEILVFPRGHKALKKGKSDEDLEGGGGRSATVEKIGSDGLAMIERQTAIFQWKDVCFDIKIGKENCRILDHVDGWVKPGILTALMGVSGAGKTTLLDVLATRTTMGIISGEMLVDGQPRDESFQRKTGYAQQQDLHLSTATVREALEFSALLRQSAHVPRQEKIDYVTEVIKLLDMTEYADAVIGVPGEGLNVEQRKRLTIGVELAARPQLLLFLDEPTSGLDSQTSWAILDLLDKLKKNGQAILCTIHQPSAMLFQRFDRLLFLQAGGRTVYFGEIGQNSQILIDYFVRNGAPPCPPDANPAEWMLDVIGAAPGSHTSINWFETWRRSPEYARVQEHLAELKHERRHQTNLFRTTSGQKREDKDSYREFAAPFWAQLYQVQVRVFQQIWRSPTYIYSKTALCVLSALFVGFSLFHTPNTIQGLQNQMFGIFMLLTLFGQLIQQIMPHFVAQRALYEVRDRPAKTYSWKAFLIANIVVELPWNSLMSVLMFLCWYYPIGLYRNAEPTDAVHLRGTQMWLMIWTFLLFSSTFAHFMIAAFDAAENAGNLGNLLFLLCLLFCGVLATPDQLPRFWIFMYRVSPFTYLVSGMLSVGISNTNVTCADNEYLRFDPVNGTCGEYMGSYMSNLGGYLADEMATANCSFCPIKETNVFLGRVSSSYSDIWRNFGLMWVFIVFNIFAACSLYWWVRVPRDKKPVAKAE.

Positions 1–20 (MNESHEAGKNSSTNVEEREE) are disordered. N2, N10, N228, N287, and N311 each carry an N-linked (GlcNAc...) asparagine glycan. Residues 110-363 (LKTLSLARIA…FLQMGFVCPD (254 aa)) form the ABC transporter 1 domain. Transmembrane regions (helical) follow at residues 474–494 (VTIS…SIFY), 508–528 (ALLF…MLTL), 554–574 (MIMD…VLYF), 583–603 (GAFF…SMFF), 616–636 (VLPF…FAIP), and 725–745 (IGVI…ATDF). In terms of domain architecture, ABC transporter 2 spans 802–1044 (FQWKDVCFDI…ILIDYFVRNG (243 aa)). 838 to 845 (GVSGAGKT) serves as a coordination point for ATP. The next 6 helical transmembrane spans lie at 1153–1173 (ALCV…PNTI), 1183–1203 (IFML…HFVA), 1223–1243 (FLIA…VLMF), 1271–1291 (LMIW…IAAF), 1297–1317 (AGNL…VLAT), and 1324–1344 (FWIF…MLSV). N-linked (GlcNAc...) asparagine glycosylation is found at N1350, N1365, and N1391. The chain crosses the membrane as a helical span at residues 1418-1438 (FGLMWVFIVFNIFAACSLYWW).

This sequence belongs to the ABC transporter superfamily. ABCG family. PDR (TC 3.A.1.205) subfamily.

The protein localises to the membrane. ABC transporter that seems not to be involved in the efflux of toxic substances, at least not the classical compounds such as itraconazole, amphotericin B, voriconazole, posaconazole, ravuconazole, or echinocandins. In Aspergillus fumigatus (strain ATCC MYA-4609 / CBS 101355 / FGSC A1100 / Af293) (Neosartorya fumigata), this protein is ABC multidrug transporter A-1.